The chain runs to 345 residues: Anthranilate phosphoribosyltransferase (345 aa).

5-phospho-alpha-D-ribose 1-diphosphate contacts are provided by residues G88, G91–D92, T96, N98–T101, K116–G124, and S128. G88 lines the anthranilate pocket. S100 contributes to the Mg(2+) binding site. N119 is an anthranilate binding site. Residue R174 coordinates anthranilate. D233 and E234 together coordinate Mg(2+).

The protein belongs to the anthranilate phosphoribosyltransferase family. As to quaternary structure, homodimer. Mg(2+) serves as cofactor.

The enzyme catalyses N-(5-phospho-beta-D-ribosyl)anthranilate + diphosphate = 5-phospho-alpha-D-ribose 1-diphosphate + anthranilate. Its pathway is amino-acid biosynthesis; L-tryptophan biosynthesis; L-tryptophan from chorismate: step 2/5. Functionally, catalyzes the transfer of the phosphoribosyl group of 5-phosphorylribose-1-pyrophosphate (PRPP) to anthranilate to yield N-(5'-phosphoribosyl)-anthranilate (PRA). The chain is Anthranilate phosphoribosyltransferase from Prochlorococcus marinus (strain NATL2A).